The chain runs to 431 residues: 3-phosphoshikimate 1-carboxyvinyltransferase (431 aa).

Positions 21, 22, and 26 each coordinate 3-phosphoshikimate. Residue K21 participates in phosphoenolpyruvate binding. Phosphoenolpyruvate-binding residues include G93 and R121. 3-phosphoshikimate-binding residues include S166, Q168, S192, D317, and K344. Residue Q168 participates in phosphoenolpyruvate binding. D317 serves as the catalytic Proton acceptor. Phosphoenolpyruvate-binding residues include R348 and R390.

This sequence belongs to the EPSP synthase family. Monomer.

Its subcellular location is the cytoplasm. It catalyses the reaction 3-phosphoshikimate + phosphoenolpyruvate = 5-O-(1-carboxyvinyl)-3-phosphoshikimate + phosphate. The protein operates within metabolic intermediate biosynthesis; chorismate biosynthesis; chorismate from D-erythrose 4-phosphate and phosphoenolpyruvate: step 6/7. In terms of biological role, catalyzes the transfer of the enolpyruvyl moiety of phosphoenolpyruvate (PEP) to the 5-hydroxyl of shikimate-3-phosphate (S3P) to produce enolpyruvyl shikimate-3-phosphate and inorganic phosphate. The chain is 3-phosphoshikimate 1-carboxyvinyltransferase from Herpetosiphon aurantiacus (strain ATCC 23779 / DSM 785 / 114-95).